The primary structure comprises 565 residues: Ubiquitin carboxyl-terminal hydrolase 21 (565 aa).

Over residues 1 to 14 (MPQASEHRLGRTRE) the composition is skewed to basic and acidic residues. Residues 1–103 (MPQASEHRLG…PPPTVALPLP (103 aa)) form a disordered region. Residues 48-57 (MLRPLPPRPG) are compositionally biased toward pro residues. Over residues 58-70 (LPDERLKKLELGR) the composition is skewed to basic and acidic residues. Residues 134–152 (ELGAALSRLALRPEPPTLR) carry the Nuclear export signal motif. One can recognise a USP domain in the interval 212–558 (VGLRNLGNTC…EGYVLFYQLM (347 aa)). The Nucleophile role is filled by C221. Residues C384, C387, C437, and C440 each coordinate Zn(2+). The active-site Proton acceptor is H518.

This sequence belongs to the peptidase C19 family. USP21 subfamily. As to quaternary structure, interacts with BEND3. Highly expressed in heart, pancreas and skeletal muscle. Also expressed in brain, placenta, liver and kidney, and at very low level in lung.

Its subcellular location is the cytoplasm. It is found in the nucleus. It catalyses the reaction Thiol-dependent hydrolysis of ester, thioester, amide, peptide and isopeptide bonds formed by the C-terminal Gly of ubiquitin (a 76-residue protein attached to proteins as an intracellular targeting signal).. In terms of biological role, deubiquitinates histone H2A, a specific tag for epigenetic transcriptional repression, thereby acting as a coactivator. Deubiquitination of histone H2A releaves the repression of di- and trimethylation of histone H3 at 'Lys-4', resulting in regulation of transcriptional initiation. Regulates gene expression via histone H2A deubiquitination. Deubiquitinates BAZ2A/TIP5 leading to its stabilization. Also capable of removing NEDD8 from NEDD8 conjugates but has no effect on Sentrin-1 conjugates. Also acts as a negative regulator of the ribosome quality control (RQC) by mediating deubiquitination of 40S ribosomal proteins RPS10/eS10 and RPS20/uS10, thereby antagonizing ZNF598-mediated 40S ubiquitination. The protein is Ubiquitin carboxyl-terminal hydrolase 21 of Homo sapiens (Human).